We begin with the raw amino-acid sequence, 285 residues long: Bifunctional protein FolD (285 aa).

Residues 165–167 (GRS) and Ser190 each bind NADP(+).

It belongs to the tetrahydrofolate dehydrogenase/cyclohydrolase family. In terms of assembly, homodimer.

The catalysed reaction is (6R)-5,10-methylene-5,6,7,8-tetrahydrofolate + NADP(+) = (6R)-5,10-methenyltetrahydrofolate + NADPH. It catalyses the reaction (6R)-5,10-methenyltetrahydrofolate + H2O = (6R)-10-formyltetrahydrofolate + H(+). Its pathway is one-carbon metabolism; tetrahydrofolate interconversion. Catalyzes the oxidation of 5,10-methylenetetrahydrofolate to 5,10-methenyltetrahydrofolate and then the hydrolysis of 5,10-methenyltetrahydrofolate to 10-formyltetrahydrofolate. The protein is Bifunctional protein FolD of Staphylococcus carnosus (strain TM300).